Reading from the N-terminus, the 197-residue chain is Imidazoleglycerol-phosphate dehydratase (197 aa).

This sequence belongs to the imidazoleglycerol-phosphate dehydratase family.

The protein resides in the cytoplasm. It carries out the reaction D-erythro-1-(imidazol-4-yl)glycerol 3-phosphate = 3-(imidazol-4-yl)-2-oxopropyl phosphate + H2O. It participates in amino-acid biosynthesis; L-histidine biosynthesis; L-histidine from 5-phospho-alpha-D-ribose 1-diphosphate: step 6/9. The polypeptide is Imidazoleglycerol-phosphate dehydratase (Teredinibacter turnerae (strain ATCC 39867 / T7901)).